Reading from the N-terminus, the 214-residue chain is Thymidylate kinase (214 aa).

10-17 contacts ATP; sequence GGEGVGKT.

Belongs to the thymidylate kinase family.

The enzyme catalyses dTMP + ATP = dTDP + ADP. Phosphorylation of dTMP to form dTDP in both de novo and salvage pathways of dTTP synthesis. The polypeptide is Thymidylate kinase (Bartonella quintana (strain Toulouse) (Rochalimaea quintana)).